The chain runs to 270 residues: uncharacterized protein (270 aa).

Residues 22-31 (EAPQRTEASR) show a composition bias toward basic and acidic residues. Positions 22 to 42 (EAPQRTEASRTHPSPFLALPG) are disordered.

This is an uncharacterized protein from Homo sapiens (Human).